The sequence spans 312 residues: Cytochrome f (312 aa).

The signal sequence occupies residues 1-28; it reads MQISKFFKFVFISVSLCGSLLFPQMANA. 4 residues coordinate heme: tyrosine 29, cysteine 49, cysteine 52, and histidine 53. The helical transmembrane segment at 278 to 298 threads the bilayer; that stretch reads VKGMIAFFFTVTVAQILLVLK.

Belongs to the cytochrome f family. As to quaternary structure, the 4 large subunits of the cytochrome b6-f complex are cytochrome b6, subunit IV (17 kDa polypeptide, petD), cytochrome f and the Rieske protein, while the 4 small subunits are PetG, PetL, PetM and PetN. The complex functions as a dimer. Heme is required as a cofactor.

Its subcellular location is the plastid. The protein resides in the chloroplast thylakoid membrane. Component of the cytochrome b6-f complex, which mediates electron transfer between photosystem II (PSII) and photosystem I (PSI), cyclic electron flow around PSI, and state transitions. This is Cytochrome f from Emiliania huxleyi (Coccolithophore).